The following is a 335-amino-acid chain: DNA-directed RNA polymerase subunit alpha (335 aa).

Positions 1 to 233 (MIRDKISVSI…DLFIPFLHGE (233 aa)) are alpha N-terminal domain (alpha-NTD). An alpha C-terminal domain (alpha-CTD) region spans residues 264-335 (KEKIAFKHIF…KRFAIDPPRN (72 aa)).

It belongs to the RNA polymerase alpha chain family. In terms of assembly, in plastids the minimal PEP RNA polymerase catalytic core is composed of four subunits: alpha, beta, beta', and beta''. When a (nuclear-encoded) sigma factor is associated with the core the holoenzyme is formed, which can initiate transcription.

Its subcellular location is the plastid. It localises to the chloroplast. It carries out the reaction RNA(n) + a ribonucleoside 5'-triphosphate = RNA(n+1) + diphosphate. In terms of biological role, DNA-dependent RNA polymerase catalyzes the transcription of DNA into RNA using the four ribonucleoside triphosphates as substrates. In Pinus koraiensis (Korean pine), this protein is DNA-directed RNA polymerase subunit alpha.